A 234-amino-acid polypeptide reads, in one-letter code: Purine nucleoside phosphorylase DeoD-type (234 aa).

Residue His4 participates in a purine D-ribonucleoside binding. Phosphate contacts are provided by residues Gly20, Arg24, Arg43, and 87–90 (RVGT). A purine D-ribonucleoside-binding positions include Glu162, 178–180 (EME), and 202–203 (SD). The active-site Proton donor is the Asp203.

It belongs to the PNP/UDP phosphorylase family. As to quaternary structure, homohexamer; trimer of homodimers.

The catalysed reaction is a purine D-ribonucleoside + phosphate = a purine nucleobase + alpha-D-ribose 1-phosphate. It carries out the reaction a purine 2'-deoxy-D-ribonucleoside + phosphate = a purine nucleobase + 2-deoxy-alpha-D-ribose 1-phosphate. Its function is as follows. Catalyzes the reversible phosphorolytic breakdown of the N-glycosidic bond in the beta-(deoxy)ribonucleoside molecules, with the formation of the corresponding free purine bases and pentose-1-phosphate. In terms of biological role, cleavage of adenosine and its derivatives. The protein is Purine nucleoside phosphorylase DeoD-type of Geobacillus stearothermophilus (Bacillus stearothermophilus).